The primary structure comprises 564 residues: Formate--tetrahydrofolate ligase (564 aa).

65–72 (TPLGEGKT) is a binding site for ATP.

This sequence belongs to the formate--tetrahydrofolate ligase family.

It carries out the reaction (6S)-5,6,7,8-tetrahydrofolate + formate + ATP = (6R)-10-formyltetrahydrofolate + ADP + phosphate. The protein operates within one-carbon metabolism; tetrahydrofolate interconversion. This chain is Formate--tetrahydrofolate ligase, found in Roseiflexus sp. (strain RS-1).